The primary structure comprises 60 residues: Short neurotoxin 1 (60 aa).

Disulfide bonds link cysteine 3-cysteine 22, cysteine 17-cysteine 39, cysteine 41-cysteine 52, and cysteine 53-cysteine 58.

It belongs to the three-finger toxin family. Short-chain subfamily. Type I alpha-neurotoxin sub-subfamily. In terms of tissue distribution, expressed by the venom gland.

It is found in the secreted. In terms of biological role, binds to muscle nicotinic acetylcholine receptor (nAChR) and inhibit acetylcholine from binding to the receptor, thereby impairing neuromuscular transmission. This Hydrophis ornatus (Ornate reef seasnake) protein is Short neurotoxin 1.